A 260-amino-acid polypeptide reads, in one-letter code: Ribonuclease HII (260 aa).

The RNase H type-2 domain maps to Arg-71–Gln-259. Asp-77, Glu-78, and Asp-169 together coordinate a divalent metal cation.

Belongs to the RNase HII family. Mn(2+) is required as a cofactor. Requires Mg(2+) as cofactor.

It localises to the cytoplasm. It catalyses the reaction Endonucleolytic cleavage to 5'-phosphomonoester.. Its function is as follows. Endonuclease that specifically degrades the RNA of RNA-DNA hybrids. The chain is Ribonuclease HII from Geobacillus kaustophilus (strain HTA426).